Consider the following 112-residue polypeptide: Gastrula zinc finger protein XlCGF9.1 (112 aa).

C2H2-type zinc fingers lie at residues 6 to 28, 34 to 56, 62 to 84, and 90 to 112; these read FICS…MKIH, FCCP…ERTH, FTCP…RIIH, and YSCP…FKIH.

The protein belongs to the krueppel C2H2-type zinc-finger protein family.

The protein resides in the nucleus. Its function is as follows. May be involved in transcriptional regulation. In Xenopus laevis (African clawed frog), this protein is Gastrula zinc finger protein XlCGF9.1.